The following is a 652-amino-acid chain: Threonine--tRNA ligase (652 aa).

The 63-residue stretch at 1–63 (MAEISLTFPD…TESGDFQLIT (63 aa)) folds into the TGS domain. Positions 246-545 (DHRVIGRDLD…LIEMYKGAFP (300 aa)) are catalytic. Zn(2+) is bound by residues Cys-340, His-391, and His-522.

Belongs to the class-II aminoacyl-tRNA synthetase family. Homodimer. Zn(2+) serves as cofactor.

Its subcellular location is the cytoplasm. The catalysed reaction is tRNA(Thr) + L-threonine + ATP = L-threonyl-tRNA(Thr) + AMP + diphosphate + H(+). Its function is as follows. Catalyzes the attachment of threonine to tRNA(Thr) in a two-step reaction: L-threonine is first activated by ATP to form Thr-AMP and then transferred to the acceptor end of tRNA(Thr). Also edits incorrectly charged L-seryl-tRNA(Thr). This chain is Threonine--tRNA ligase, found in Leuconostoc mesenteroides subsp. mesenteroides (strain ATCC 8293 / DSM 20343 / BCRC 11652 / CCM 1803 / JCM 6124 / NCDO 523 / NBRC 100496 / NCIMB 8023 / NCTC 12954 / NRRL B-1118 / 37Y).